The sequence spans 591 residues: Glutathione S-transferase T2 (591 aa).

A GST N-terminal domain is found at 1–82 (MKLKVYADRM…YLSSAYASVV (82 aa)). Glutathione contacts are provided by residues 11–12 (SQ), 40–41 (QL), 53–54 (KV), and 66–67 (ES). A GST C-terminal domain is found at 89-226 (DLSKRAKIHS…EVLFRAKDRF (138 aa)). The segment at 229 to 272 (QREMATASKPGPQSKIIQFSSIGGTSDGPNLVQDTTDRKARRRK) is disordered. A compositionally biased stretch (polar residues) spans 243 to 262 (KIIQFSSIGGTSDGPNLVQD). The Myb-like domain occupies 265-338 (DRKARRRKWS…HCRQRWRKIN (74 aa)).

It belongs to the GST superfamily. Theta family.

Its subcellular location is the peroxisome. It catalyses the reaction RX + glutathione = an S-substituted glutathione + a halide anion + H(+). Functionally, may be involved in the conjugation of reduced glutathione to a wide number of exogenous and endogenous hydrophobic electrophiles and have a detoxification role against certain herbicides. The polypeptide is Glutathione S-transferase T2 (GSTT2) (Arabidopsis thaliana (Mouse-ear cress)).